Reading from the N-terminus, the 184-residue chain is Protein CPn_0803/CP_1068/CPj0803/CpB0832 (184 aa).

It belongs to the chlamydial CPn_0803/CT_584/TC_0873 family.

This chain is Protein CPn_0803/CP_1068/CPj0803/CpB0832, found in Chlamydia pneumoniae (Chlamydophila pneumoniae).